Consider the following 212-residue polypeptide: Thymidylate kinase (212 aa).

Glycine 10–threonine 17 is an ATP binding site.

The protein belongs to the thymidylate kinase family.

It catalyses the reaction dTMP + ATP = dTDP + ADP. Its function is as follows. Phosphorylation of dTMP to form dTDP in both de novo and salvage pathways of dTTP synthesis. This is Thymidylate kinase from Enterococcus faecalis (strain ATCC 700802 / V583).